A 464-amino-acid chain; its full sequence is MAASFKALPQQLTLTRSFARCYSVSAESIPAAKKKYVPTEGSYPQGFQASGILVGVKPGNKTKPDLAFLTSDRPCAAAAVFTKNKFQAAPVTFSRDLLKRRGNRGIRGVLINSGCANAVTGKGGLEDASLMAKAADEQLGGEDGAGSSTIVMSTGVIGQRLPIDKIVGNVGAAHGALGSGHKDWLACATAICTTDTFPKLMSRTFSLPSSPGVEYRMAGMTKGAGMIHPNMATLLGVVATDAPIAPGVMPSVLKHAVDRSFNSITIDGDTSTNDTVALLANGAAGGQEISSVDSPDYAAFQTVLSDFSADLAKLIVRDGEGATKFVTIRVVDSASEEAARKVASTIARSPLVKTALYGRDANWGRILCATGYALISEPGQDINEVASIVSEKTNVSFVPTDGSAELKLLVNGEPETVDEARASEILELEDLEILVKLGTGDKQATYWTCDYSHEYITINGDYRT.

Residues 1-22 (MAASFKALPQQLTLTRSFARCY) constitute a mitochondrion transit peptide. Residues T193, K222, T233, E320, N459, and T464 each coordinate substrate. T233 serves as the catalytic Nucleophile.

It belongs to the ArgJ family. As to quaternary structure, heterodimer of an alpha and a beta chain. Post-translationally, the alpha and beta chains are autoproteolytically processed from a single precursor protein within the mitochondrion.

It is found in the mitochondrion matrix. The enzyme catalyses N(2)-acetyl-L-ornithine + L-glutamate = N-acetyl-L-glutamate + L-ornithine. The catalysed reaction is L-glutamate + acetyl-CoA = N-acetyl-L-glutamate + CoA + H(+). It functions in the pathway amino-acid biosynthesis; L-arginine biosynthesis; L-ornithine and N-acetyl-L-glutamate from L-glutamate and N(2)-acetyl-L-ornithine (cyclic): step 1/1. It participates in amino-acid biosynthesis; L-arginine biosynthesis; N(2)-acetyl-L-ornithine from L-glutamate: step 1/4. Functionally, catalyzes two activities which are involved in the cyclic version of arginine biosynthesis: the synthesis of acetylglutamate from glutamate and acetyl-CoA, and of ornithine by transacetylation between acetylornithine and glutamate. This is Arginine biosynthesis bifunctional protein ArgJ, mitochondrial from Verticillium alfalfae (strain VaMs.102 / ATCC MYA-4576 / FGSC 10136) (Verticillium wilt of alfalfa).